Here is an 89-residue protein sequence, read N- to C-terminus: Small ribosomal subunit protein uS14 (89 aa).

Belongs to the universal ribosomal protein uS14 family. In terms of assembly, part of the 30S ribosomal subunit. Contacts proteins S3 and S10.

Its function is as follows. Binds 16S rRNA, required for the assembly of 30S particles and may also be responsible for determining the conformation of the 16S rRNA at the A site. This is Small ribosomal subunit protein uS14 from Phytoplasma australiense.